The primary structure comprises 274 residues: WIMGHMVNAIEQVDEFLNLGANAIEFDIDFDKDGIAQITHHGIPCDCGRKCTKKAIFTEYLDNIRQVTTPDDPKFREQLVLLALDLKLQRISSAKAYRAGEDVAKKLLDHYWQRGNSRARAYILLNIPLVEDYEFIRAFKDTLKNEGYESYNDKVGINFTGNEDLDKIRDVLEILGIHKQVWQADGITSCFARGTERLKEALEKRDTPGYNYINKVYAWTLVRKSIMRRSLRLGVDGVMSNNPDRVIKVLKEKEFADKFRLATYNDNPWEKFRG.

Residue His5 is part of the active site. Positions 25 and 27 each coordinate Mg(2+). Residue His41 is the Nucleophile of the active site. 2 disulfides stabilise this stretch: Cys45–Cys51 and Cys47–Cys190. Asp85 lines the Mg(2+) pocket.

Belongs to the arthropod phospholipase D family. Class II subfamily. It depends on Mg(2+) as a cofactor. As to expression, expressed by the venom gland.

The protein localises to the secreted. The catalysed reaction is an N-(acyl)-sphingosylphosphocholine = an N-(acyl)-sphingosyl-1,3-cyclic phosphate + choline. It carries out the reaction an N-(acyl)-sphingosylphosphoethanolamine = an N-(acyl)-sphingosyl-1,3-cyclic phosphate + ethanolamine. The enzyme catalyses a 1-acyl-sn-glycero-3-phosphocholine = a 1-acyl-sn-glycero-2,3-cyclic phosphate + choline. It catalyses the reaction a 1-acyl-sn-glycero-3-phosphoethanolamine = a 1-acyl-sn-glycero-2,3-cyclic phosphate + ethanolamine. In terms of biological role, dermonecrotic toxins cleave the phosphodiester linkage between the phosphate and headgroup of certain phospholipids (sphingolipid and lysolipid substrates), forming an alcohol (often choline) and a cyclic phosphate. This toxin acts on sphingomyelin (SM). It may also act on ceramide phosphoethanolamine (CPE), lysophosphatidylcholine (LPC) and lysophosphatidylethanolamine (LPE), but not on lysophosphatidylserine (LPS), and lysophosphatidylglycerol (LPG). It acts by transphosphatidylation, releasing exclusively cyclic phosphate products as second products. Induces dermonecrosis, hemolysis, increased vascular permeability, edema, inflammatory response, and platelet aggregation. The polypeptide is Dermonecrotic toxin SdSicTox-betaIIB1bvii (Sicarius cf. damarensis (strain GJB-2008) (Six-eyed sand spider)).